A 758-amino-acid chain; its full sequence is 5-methyltetrahydropteroyltriglutamate--homocysteine methyltransferase (758 aa).

Residues 17–20 and lysine 110 contribute to the 5-methyltetrahydropteroyltri-L-glutamate site; that span reads RELK. L-homocysteine is bound by residues 428 to 430 and glutamate 481; that span reads IGS. Residues 428–430 and glutamate 481 contribute to the L-methionine site; that span reads IGS. 5-methyltetrahydropteroyltri-L-glutamate-binding positions include 512-513 and tryptophan 558; that span reads RC. Residue aspartate 596 coordinates L-homocysteine. Aspartate 596 lines the L-methionine pocket. 5-methyltetrahydropteroyltri-L-glutamate is bound at residue glutamate 602. Residues histidine 638, cysteine 640, and glutamate 662 each contribute to the Zn(2+) site. Catalysis depends on histidine 691, which acts as the Proton donor. Cysteine 723 serves as a coordination point for Zn(2+).

This sequence belongs to the vitamin-B12 independent methionine synthase family. It depends on Zn(2+) as a cofactor.

The enzyme catalyses 5-methyltetrahydropteroyltri-L-glutamate + L-homocysteine = tetrahydropteroyltri-L-glutamate + L-methionine. Its pathway is amino-acid biosynthesis; L-methionine biosynthesis via de novo pathway; L-methionine from L-homocysteine (MetE route): step 1/1. Catalyzes the transfer of a methyl group from 5-methyltetrahydrofolate to homocysteine resulting in methionine formation. This is 5-methyltetrahydropteroyltriglutamate--homocysteine methyltransferase from Thermosynechococcus vestitus (strain NIES-2133 / IAM M-273 / BP-1).